A 442-amino-acid polypeptide reads, in one-letter code: MGKEKEHLNLVVIGHVDSGKSTTTGHLIYKLGGIDARTIEKFEKESAEMGKASFKYAWVLDKLKAERERGITIDIALWKFETENRHYTIIDAPGHRDFIKNMITGTSQADAAILIIASGTGEFEAGISKEGQTREHALLAYTMGVKQMVVAMNKMDSTEPPYSEDRYEEIKKEVSTFLAKVGYKPAKMNFVPISGFQGDNIQENSTNMPWYKGPTLCAALDSFKIPKRPIAKPLRLPLQDVYKIGGIGTVPVGRVETGVLKAGMVITFAPKGCSAECKSVEMHHEEVPEAAPGNNVGFNVKGLSVKDIKRGFVASDSKNDPATDTESFVSHTIVMNHPGEIKAGYTPVIDCHTAHIACKFEELLTKADKRSGKMTEENPKFLKAGDAGLIRLSPSKPLCVETFATYAPLGRFAVRDMRQTVAVGVIQEIKKKATEDKKGKKK.

The tr-type G domain maps to 5-227; that stretch reads KEHLNLVVIG…AALDSFKIPK (223 aa). The interval 14 to 21 is G1; sequence GHVDSGKS. 14 to 21 is a GTP binding site; the sequence is GHVDSGKS. A G2 region spans residues 70–74; the sequence is GITID. The G3 stretch occupies residues 91-94; it reads DAPG. GTP contacts are provided by residues 91-95 and 153-156; these read DAPGH and NKMD. The segment at 153–156 is G4; it reads NKMD. Positions 194–196 are G5; the sequence is SGF.

The protein belongs to the TRAFAC class translation factor GTPase superfamily. Classic translation factor GTPase family. EF-Tu/EF-1A subfamily.

It is found in the cytoplasm. This protein promotes the GTP-dependent binding of aminoacyl-tRNA to the A-site of ribosomes during protein biosynthesis. This chain is Elongation factor 1-alpha 1 (EFA1), found in Euplotes crassus.